We begin with the raw amino-acid sequence, 205 residues long: Nuclear transcription factor Y subunit beta (205 aa).

The segment at 1-50 (MDGDSSTTDASQLGIAGDYIGGSHYVIQPHDDTEDSMNDHEDTNGSKESF) is a domain. A disordered region spans residues 24–50 (HYVIQPHDDTEDSMNDHEDTNGSKESF). Basic and acidic residues predominate over residues 37-50 (MNDHEDTNGSKESF). Positions 51–140 (REQDIYLPIA…PLKLYLQKFR (90 aa)) are b domain. Residues 57-63 (LPIANVA) mediate DNA binding. The subunit association domain (SAD) stretch occupies residues 84 to 95 (VQECVSEFISFI). Positions 141 to 201 (EAMKGEKGIG…SYQQISGVQQ (61 aa)) are c domain.

The protein belongs to the NFYB/HAP3 subunit family. Heterotrimeric transcription factor composed of three components, NF-YA, NF-YB and NF-YC. NF-YB and NF-YC must interact and dimerize for NF-YA association and DNA binding.

Its subcellular location is the nucleus. In terms of biological role, component of the sequence-specific heterotrimeric transcription factor (NF-Y) which specifically recognizes a 5'-CCAAT-3' box motif found in the promoters of its target genes. NF-Y can function as both an activator and a repressor, depending on its interacting cofactors. This Gallus gallus (Chicken) protein is Nuclear transcription factor Y subunit beta (NFYB).